The following is a 255-amino-acid chain: Hemin import ATP-binding protein HmuV (255 aa).

An ABC transporter domain is found at 2–238; that stretch reads LRVENLSIRR…EPLRAVFGLE (237 aa). 34-41 contacts ATP; sequence GPNGAGKS.

Belongs to the ABC transporter superfamily. Heme (hemin) importer (TC 3.A.1.14.5) family. In terms of assembly, the complex is composed of two ATP-binding proteins (HmuV), two transmembrane proteins (HmuU) and a solute-binding protein (HmuT).

The protein localises to the cell inner membrane. Functionally, part of the ABC transporter complex HmuTUV involved in hemin import. Responsible for energy coupling to the transport system. The sequence is that of Hemin import ATP-binding protein HmuV from Pseudomonas aeruginosa (strain ATCC 15692 / DSM 22644 / CIP 104116 / JCM 14847 / LMG 12228 / 1C / PRS 101 / PAO1).